Here is a 1081-residue protein sequence, read N- to C-terminus: Cellulose synthase A catalytic subunit 1 [UDP-forming] (1081 aa).

Residue Met1 is modified to N-acetylmethionine. Residues 1-270 lie on the Cytoplasmic side of the membrane; it reads MEASAGLVAG…SRVVPIPSSR (270 aa). Zn(2+) contacts are provided by Cys39, Cys42, Cys58, Cys61, Cys66, Cys69, Cys81, and Cys84. The RING-type; degenerate zinc-finger motif lies at 39–85; the sequence is CQICGDDVGLAETGDVFVACNECAFPVCRPCYEYERKDGTQCCPQCK. The disordered stretch occupies residues 118–195; sequence GANKARHQRH…RQPVPVRIVD (78 aa). The segment covering 127 to 139 has biased composition (basic and acidic residues); that stretch reads HGEEFSSSSRHES. The segment covering 158–168 has biased composition (polar residues); sequence PDTQSVRTTSG. Residues 271–291 traverse the membrane as a helical segment; it reads LTPYRVVIILRLIILCFFLQY. Topologically, residues 292-299 are extracellular; the sequence is RTTHPVKN. The helical transmembrane segment at 300–320 threads the bilayer; it reads AYPLWLTSVICEIWFAFSWLL. The Cytoplasmic portion of the chain corresponds to 321–856; sequence DQFPKWYPIN…LLERIAYINT (536 aa). Residues Ser359, Lys365, Glu366, and Asp395 each contribute to the UDP-alpha-D-glucose site. Residue Asp395 is part of the active site. Positions 449–476 form a coiled coil; sequence VKERRAMKREYEEFKVRINALVAKAQKI. UDP-alpha-D-glucose is bound at residue Lys536. Mn(2+) contacts are provided by Lys537 and Asp561. Residue Asp780 is part of the active site. Residues 857–877 traverse the membrane as a helical segment; it reads IVYPITSIPLIAYCILPAFCL. At 878–889 the chain is on the extracellular side; the sequence is ITDRFIIPEISN. A helical membrane pass occupies residues 890 to 910; it reads YASIWFILLFISIAVTGILEL. Residues 911 to 925 lie on the Cytoplasmic side of the membrane; that stretch reads RWSGVSIEDWWRNEQ. Residues 926–946 traverse the membrane as a helical segment; the sequence is FWVIGGTSAHLFAVFQGLLKV. At 947–976 the chain is on the extracellular side; that stretch reads LAGIDTNFTVTSKATDEDGDFAELYIFKWT. Asn953 carries an N-linked (GlcNAc...) asparagine glycan. A helical transmembrane segment spans residues 977 to 997; sequence ALLIPPTTVLLVNLIGIVAGV. Residues 998–1008 lie on the Cytoplasmic side of the membrane; that stretch reads SYAVNSGYQSW. Residues 1009 to 1029 traverse the membrane as a helical segment; the sequence is GPLFGKLFFALWVIAHLYPFL. The Extracellular portion of the chain corresponds to 1030–1038; sequence KGLLGRQNR. A helical transmembrane segment spans residues 1039 to 1059; it reads TPTIVIVWSVLLASIFSLLWV. The Cytoplasmic portion of the chain corresponds to 1060 to 1081; the sequence is RINPFVDANPNANNFNGKGGVF.

The protein belongs to the glycosyltransferase 2 family. Plant cellulose synthase subfamily. As to quaternary structure, interacts with CESA3 and CESA6. Assembly with CESA3 and CESA6 is required for functional complex in primary cell wall cellulose synthesis. Interacts with STL1 and STL2, but not with GOT1. Binds to CSI1. Interacts with PAT24/TIP1. It depends on Zn(2+) as a cofactor. The cofactor is Mn(2+). In terms of processing, S-acylated. Expressed in germinating seeds, seedlings, roots, stems, shoots leaves and flowers, but not in mature flowers.

It localises to the cell membrane. It carries out the reaction [(1-&gt;4)-beta-D-glucosyl](n) + UDP-alpha-D-glucose = [(1-&gt;4)-beta-D-glucosyl](n+1) + UDP + H(+). It participates in glycan metabolism; plant cellulose biosynthesis. In terms of biological role, catalytic subunit of cellulose synthase terminal complexes ('rosettes'), required for beta-1,4-glucan microfibril crystallization, a major mechanism of the cell wall formation. Involved in the primary cell wall formation. Required during embryogenesis for cell elongation, orientation of cell expansion and complex cell wall formations, such as interdigitated pattern of epidermal pavement cells, stomatal guard cells and trichomes. Plays a role in lateral roots formation, but seems not necessary for the development of tip-growing cells such as root hairs. The presence of each protein CESA1 and CESA6 is critical for cell expansion after germination. The protein is Cellulose synthase A catalytic subunit 1 [UDP-forming] of Arabidopsis thaliana (Mouse-ear cress).